The following is a 423-amino-acid chain: Glutamyl-tRNA reductase (423 aa).

Substrate contacts are provided by residues 51–54 (TCNR), S99, 104–106 (EDQ), and Q110. The active-site Nucleophile is C52. An NADP(+)-binding site is contributed by 179–184 (GSGEMG).

Belongs to the glutamyl-tRNA reductase family. In terms of assembly, homodimer.

It catalyses the reaction (S)-4-amino-5-oxopentanoate + tRNA(Glu) + NADP(+) = L-glutamyl-tRNA(Glu) + NADPH + H(+). The protein operates within porphyrin-containing compound metabolism; protoporphyrin-IX biosynthesis; 5-aminolevulinate from L-glutamyl-tRNA(Glu): step 1/2. Functionally, catalyzes the NADPH-dependent reduction of glutamyl-tRNA(Glu) to glutamate 1-semialdehyde (GSA). This chain is Glutamyl-tRNA reductase, found in Methanoculleus marisnigri (strain ATCC 35101 / DSM 1498 / JR1).